Consider the following 255-residue polypeptide: 3-oxo-5-alpha-steroid 4-dehydrogenase 1 (255 aa).

The next 5 membrane-spanning stretches (helical) occupy residues L6–G26, V82–I102, P107–Q127, V142–I162, and F205–L225.

This sequence belongs to the steroid 5-alpha reductase family.

The protein localises to the microsome membrane. The protein resides in the endoplasmic reticulum membrane. It carries out the reaction a 3-oxo-5alpha-steroid + NADP(+) = a 3-oxo-Delta(4)-steroid + NADPH + H(+). It catalyses the reaction 5alpha-pregnane-3,20-dione + NADP(+) = progesterone + NADPH + H(+). The enzyme catalyses 17beta-hydroxy-5alpha-androstan-3-one + NADP(+) = testosterone + NADPH + H(+). The catalysed reaction is androst-4-ene-3,17-dione + NADPH + H(+) = 5alpha-androstan-3,17-dione + NADP(+). In terms of biological role, converts testosterone into 5-alpha-dihydrotestosterone and progesterone or corticosterone into their corresponding 5-alpha-3-oxosteroids. It plays a central role in sexual differentiation and androgen physiology. The protein is 3-oxo-5-alpha-steroid 4-dehydrogenase 1 of Mus musculus (Mouse).